Here is a 366-residue protein sequence, read N- to C-terminus: METQLYIGIMSGTSMDGADAVLIRMDGGKWLGAEGHAFTPYPDRLRRKLLDLQDTGTDELHRSRMLSQELSRLYAQTVGELLNKQNLAPSDITALGCHGQTVRHAPEHGYSVQLADLPLLAELTQIFTVGDFRSRDLAAGGQGAPLVPAFHEALFRDDRETRAVLNIGGIANISVLPPDAPAFGFDTGPGNMLMDAWMQAHWQLPYDKNGAKAAQGNILPQLLDRLLAHPYFAQPHPKSTGRELFALNWLETYLDGGENRYDVLRTLSRFTAQTVFDAVSHAAADARQMYICGGGIRNPVLMADLAECFGTRVSLHSTAELNLDPQWVEAAAFAWMAACWVNRIPGSPHKATGASKPCILGAGYYY.

12–19 (GTSMDGAD) contributes to the ATP binding site.

This sequence belongs to the anhydro-N-acetylmuramic acid kinase family.

It catalyses the reaction 1,6-anhydro-N-acetyl-beta-muramate + ATP + H2O = N-acetyl-D-muramate 6-phosphate + ADP + H(+). Its pathway is amino-sugar metabolism; 1,6-anhydro-N-acetylmuramate degradation. It participates in cell wall biogenesis; peptidoglycan recycling. Its function is as follows. Catalyzes the specific phosphorylation of 1,6-anhydro-N-acetylmuramic acid (anhMurNAc) with the simultaneous cleavage of the 1,6-anhydro ring, generating MurNAc-6-P. Is required for the utilization of anhMurNAc either imported from the medium or derived from its own cell wall murein, and thus plays a role in cell wall recycling. The polypeptide is Anhydro-N-acetylmuramic acid kinase (Neisseria meningitidis serogroup C (strain 053442)).